We begin with the raw amino-acid sequence, 127 residues long: Large ribosomal subunit protein bL17 (127 aa).

This sequence belongs to the bacterial ribosomal protein bL17 family. In terms of assembly, part of the 50S ribosomal subunit. Contacts protein L32.

The chain is Large ribosomal subunit protein bL17 from Lactobacillus johnsonii (strain CNCM I-12250 / La1 / NCC 533).